Reading from the N-terminus, the 743-residue chain is Iron-sulfur clusters transporter ABCB7, mitochondrial (743 aa).

The N-terminal 19 residues, 1–19 (MAPLLVPLKCGFHMQRRKL), are a transit peptide targeting the mitochondrion. At 20–131 (SLLLQRSSAV…KDRPDLRARV (112 aa)) the chain is on the mitochondrial matrix side. Residues 45 to 64 (ERNTYLLSDPSRESSTWANN) form a disordered region. Positions 131–427 (VVISLSLLAG…LGTVYRETRQ (297 aa)) constitute an ABC transmembrane type-1 domain. A helical membrane pass occupies residues 132–152 (VISLSLLAGAKITNVMVPFMF). Topologically, residues 153–168 (KYAVDSLNQMSGHMLN) are mitochondrial intermembrane. Residues 169–189 (LSDAPNTVVTMATAVLIGYGV) traverse the membrane as a helical segment. At 190 to 250 (SRTGSALFNE…SKAIDRGTRG (61 aa)) the chain is on the mitochondrial matrix side. Residues 251–271 (ISFVLSALVFNLGPTLFEMML) form a helical membrane-spanning segment. Topologically, residues 272-281 (VSGILYYKCG) are mitochondrial intermembrane. The helical transmembrane segment at 282–302 (GHFALVTLGTLSAYTAFTVAV) threads the bilayer. Residues 303-364 (TQWRTQFRIE…ESSSLKTTST (62 aa)) are Mitochondrial matrix-facing. Residues 306-310 (RTQFR) and 369-372 (NFGQ) contribute to the glutathione site. The helical transmembrane segment at 365–385 (LAMLNFGQSAIFSVGLTAIMV) threads the bilayer. The Mitochondrial intermembrane segment spans residues 386 to 400 (LASKGIMSGTMTVGD). Residues 401-421 (LVMVNGLLFQLSLPLNFLGTV) form a helical membrane-spanning segment. A glutathione-binding site is contributed by glycine 419. The Mitochondrial matrix segment spans residues 422-743 (YRETRQALID…SVKGCGNCSC (322 aa)). The region spanning 463 to 697 (IRFEDVYFEY…PGSLYANLWN (235 aa)) is the ABC transporter domain. Residues tyrosine 472 and 496-503 (GGSGSGKS) each bind ATP. The tract at residues 703-724 (ILSNGSKPEPVPERVSQKEEER) is disordered. A compositionally biased stretch (basic and acidic residues) spans 712–724 (PVPERVSQKEEER).

This sequence belongs to the ABC transporter superfamily. ABCB family. Heavy Metal importer (TC 3.A.1.210) subfamily. Homodimer.

The protein resides in the mitochondrion inner membrane. It carries out the reaction (glutathione)4[2Fe(III)-2S] cluster(in) + ATP + H2O = (glutathione)4[2Fe(III)-2S] cluster(out) + ADP + phosphate + H(+). Functionally, exports glutathione-coordinated iron-sulfur clusters such as [2Fe-2S]-(GS)4 cluster from the mitochondria to the cytosol in an ATP-dependent manner allowing the assembly of the cytosolic iron-sulfur (Fe/S) cluster-containing proteins and participates in iron homeostasis. May play a role in cadmium, zinc and mercury detoxification. The protein is Iron-sulfur clusters transporter ABCB7, mitochondrial (abcb7) of Danio rerio (Zebrafish).